Reading from the N-terminus, the 258-residue chain is Phycoerythrobilin:ferredoxin oxidoreductase (258 aa).

Belongs to the HY2 family.

The enzyme catalyses (3Z)-phycoerythrobilin + oxidized 2[4Fe-4S]-[ferredoxin] = 15,16-dihydrobiliverdin + reduced 2[4Fe-4S]-[ferredoxin] + 2 H(+). Functionally, catalyzes the two-electron reduction of the C2 and C3(1) diene system of 15,16-dihydrobiliverdin. The chain is Phycoerythrobilin:ferredoxin oxidoreductase from Prochlorococcus marinus (strain NATL2A).